The chain runs to 216 residues: Mite allergen Lep d 7 (216 aa).

The N-terminal stretch at 1–19 (MQYLAIAVIVALAGLSAAA) is a signal peptide.

The protein belongs to the mite group 7 allergen family.

It is found in the secreted. This chain is Mite allergen Lep d 7, found in Lepidoglyphus destructor (Storage mite).